The chain runs to 61 residues: Metallothionein-2 (61 aa).

Methionine 1 bears the N-acetylmethionine mark. Residues 1 to 29 (MDPNCSCATDGSCSCAGSCKCKQCKCTSC) form a beta region. Residues cysteine 5, cysteine 7, cysteine 13, cysteine 15, cysteine 19, cysteine 21, cysteine 24, cysteine 26, cysteine 29, cysteine 33, cysteine 34, cysteine 36, cysteine 37, cysteine 41, cysteine 44, cysteine 48, cysteine 50, and cysteine 57 each contribute to the a divalent metal cation site. The tract at residues 30-61 (KKSCCSCCPVGCAKCSQGCICKEASDKCSCCA) is alpha. Serine 58 is subject to Phosphoserine. Positions 59 and 60 each coordinate a divalent metal cation.

Belongs to the metallothionein superfamily. Type 1 family.

Functionally, metallothioneins have a high content of cysteine residues that bind various heavy metals; these proteins are transcriptionally regulated by both heavy metals and glucocorticoids. The polypeptide is Metallothionein-2 (Mt2) (Rattus norvegicus (Rat)).